The sequence spans 122 residues: Large ribosomal subunit protein uL14c (122 aa).

Belongs to the universal ribosomal protein uL14 family. In terms of assembly, part of the 50S ribosomal subunit.

The protein localises to the plastid. It localises to the chloroplast. In terms of biological role, binds to 23S rRNA. The sequence is that of Large ribosomal subunit protein uL14c from Gossypium barbadense (Sea Island cotton).